The chain runs to 138 residues: Large ribosomal subunit protein bL17 (138 aa).

It belongs to the bacterial ribosomal protein bL17 family. As to quaternary structure, part of the 50S ribosomal subunit. Contacts protein L32.

In Methylorubrum populi (strain ATCC BAA-705 / NCIMB 13946 / BJ001) (Methylobacterium populi), this protein is Large ribosomal subunit protein bL17.